The chain runs to 21 residues: Glutathione S-transferase 1 (21 aa).

This sequence belongs to the GST superfamily. Phi family.

The catalysed reaction is RX + glutathione = an S-substituted glutathione + a halide anion + H(+). Functionally, conjugation of reduced glutathione to a wide number of exogenous and endogenous hydrophobic electrophiles. In plants, may have a detoxification role against certain herbicides. The polypeptide is Glutathione S-transferase 1 (Populus euphratica (Euphrates poplar)).